The primary structure comprises 304 residues: UDP-3-O-acyl-N-acetylglucosamine deacetylase (304 aa).

Positions 78, 235, and 239 each coordinate Zn(2+). The Proton donor role is filled by H262.

The protein belongs to the LpxC family. Requires Zn(2+) as cofactor.

It carries out the reaction a UDP-3-O-[(3R)-3-hydroxyacyl]-N-acetyl-alpha-D-glucosamine + H2O = a UDP-3-O-[(3R)-3-hydroxyacyl]-alpha-D-glucosamine + acetate. It participates in glycolipid biosynthesis; lipid IV(A) biosynthesis; lipid IV(A) from (3R)-3-hydroxytetradecanoyl-[acyl-carrier-protein] and UDP-N-acetyl-alpha-D-glucosamine: step 2/6. Its function is as follows. Catalyzes the hydrolysis of UDP-3-O-myristoyl-N-acetylglucosamine to form UDP-3-O-myristoylglucosamine and acetate, the committed step in lipid A biosynthesis. The chain is UDP-3-O-acyl-N-acetylglucosamine deacetylase from Anaeromyxobacter sp. (strain Fw109-5).